We begin with the raw amino-acid sequence, 333 residues long: Glycerol-3-phosphate dehydrogenase [NAD(P)+] (333 aa).

NADPH-binding residues include Tyr14, His34, and Lys108. Sn-glycerol 3-phosphate contacts are provided by Lys108, Gly137, and Thr139. Residue Ala141 participates in NADPH binding. The sn-glycerol 3-phosphate site is built by Lys193, Asp247, Ser257, Arg258, and Asn259. Residue Lys193 is the Proton acceptor of the active site. An NADPH-binding site is contributed by Arg258. Residues Leu282 and Glu284 each contribute to the NADPH site.

The protein belongs to the NAD-dependent glycerol-3-phosphate dehydrogenase family.

It localises to the cytoplasm. It catalyses the reaction sn-glycerol 3-phosphate + NAD(+) = dihydroxyacetone phosphate + NADH + H(+). It carries out the reaction sn-glycerol 3-phosphate + NADP(+) = dihydroxyacetone phosphate + NADPH + H(+). It functions in the pathway membrane lipid metabolism; glycerophospholipid metabolism. Its function is as follows. Catalyzes the reduction of the glycolytic intermediate dihydroxyacetone phosphate (DHAP) to sn-glycerol 3-phosphate (G3P), the key precursor for phospholipid synthesis. This Blochmanniella floridana protein is Glycerol-3-phosphate dehydrogenase [NAD(P)+].